The sequence spans 266 residues: Hydroxyethylthiazole kinase (266 aa).

Met-43 is a substrate binding site. ATP contacts are provided by Arg-119 and Thr-166. Gly-193 is a binding site for substrate.

The protein belongs to the Thz kinase family. Requires Mg(2+) as cofactor.

It carries out the reaction 5-(2-hydroxyethyl)-4-methylthiazole + ATP = 4-methyl-5-(2-phosphooxyethyl)-thiazole + ADP + H(+). It participates in cofactor biosynthesis; thiamine diphosphate biosynthesis; 4-methyl-5-(2-phosphoethyl)-thiazole from 5-(2-hydroxyethyl)-4-methylthiazole: step 1/1. Its function is as follows. Catalyzes the phosphorylation of the hydroxyl group of 4-methyl-5-beta-hydroxyethylthiazole (THZ). This Methanococcus maripaludis (strain C5 / ATCC BAA-1333) protein is Hydroxyethylthiazole kinase.